Consider the following 72-residue polypeptide: Translation initiation factor IF-1 (72 aa).

Residues 1 to 72 (MSKEDVIEVE…TRGRITWRAK (72 aa)) form the S1-like domain.

It belongs to the IF-1 family. As to quaternary structure, component of the 30S ribosomal translation pre-initiation complex which assembles on the 30S ribosome in the order IF-2 and IF-3, IF-1 and N-formylmethionyl-tRNA(fMet); mRNA recruitment can occur at any time during PIC assembly.

Its subcellular location is the cytoplasm. In terms of biological role, one of the essential components for the initiation of protein synthesis. Stabilizes the binding of IF-2 and IF-3 on the 30S subunit to which N-formylmethionyl-tRNA(fMet) subsequently binds. Helps modulate mRNA selection, yielding the 30S pre-initiation complex (PIC). Upon addition of the 50S ribosomal subunit IF-1, IF-2 and IF-3 are released leaving the mature 70S translation initiation complex. In Acetivibrio thermocellus (strain ATCC 27405 / DSM 1237 / JCM 9322 / NBRC 103400 / NCIMB 10682 / NRRL B-4536 / VPI 7372) (Clostridium thermocellum), this protein is Translation initiation factor IF-1.